Consider the following 148-residue polypeptide: MAHLLLLHGPNLNLLGTREPEIYGRITLPQIDAALAERAATAGHGLSSLQSNAEHVLIERIHATREDGTAFILINPGAFTHTSVALRDALLAVALPFVEIHLSNPHTREPFRHHSYLADKALGVVCGFGVDSYRIALEGVIARLGSDV.

The Proton acceptor role is filled by Tyr23. Substrate-binding residues include Asn75, His81, and Asp88. His101 (proton donor) is an active-site residue. Residues 102–103 (LS) and Arg112 contribute to the substrate site.

This sequence belongs to the type-II 3-dehydroquinase family. As to quaternary structure, homododecamer.

The catalysed reaction is 3-dehydroquinate = 3-dehydroshikimate + H2O. It functions in the pathway metabolic intermediate biosynthesis; chorismate biosynthesis; chorismate from D-erythrose 4-phosphate and phosphoenolpyruvate: step 3/7. Its function is as follows. Catalyzes a trans-dehydration via an enolate intermediate. The protein is 3-dehydroquinate dehydratase of Xylella fastidiosa (strain M23).